We begin with the raw amino-acid sequence, 441 residues long: MNFLAAAGVRRLCAMRAVLPCLWRGKYFSSGNEPAENNTVTPMLRHLIYKIKSTGPITVAEYMKEVLTNPAKGYYMNRDMLGEEGDFITSPEISQMFGELLGIWFISEWIAAGKNAAFQLVELGPGKGTLLGDILRVFSQLGSLLKNCDISLHLVEVSQKLSEIQALTLTEEKVPLERNAESPVYMKGVTKSGIPVSWYRDLQDVPKEYSFYLAHEFFDVLPVHKFQKTPHGWREVLVDIDPQVSDKLRFVLAPCATPAGAFIQNDETRDHVEVCPEAGVVIQELSQRISLTGGAALIADYGHDGTKTDTFRGFCGYRLHDVLTAPGTADLTADVDFSYLRRMSQGKVASLGPVEQQTFLRNMGIDVRLKILLDKTDDPSLRQQLLQGYNMLMNPMKMGERFNFLALVPHQRLHGRNHQTNARQSKPSPSPVAGFGELAWQ.

Residues 1-46 (MNFLAAAGVRRLCAMRAVLPCLWRGKYFSSGNEPAENNTVTPMLRH) constitute a mitochondrion transit peptide. Residues 415–434 (GRNHQTNARQSKPSPSPVAG) are disordered. A compositionally biased stretch (polar residues) spans 418–427 (HQTNARQSKP).

Belongs to the NDUFAF7 family. Interacts with NDUFS2.

The protein localises to the mitochondrion. It catalyses the reaction L-arginyl-[protein] + 2 S-adenosyl-L-methionine = N(omega),N(omega)'-dimethyl-L-arginyl-[protein] + 2 S-adenosyl-L-homocysteine + 2 H(+). In terms of biological role, arginine methyltransferase involved in the assembly or stability of mitochondrial NADH:ubiquinone oxidoreductase complex (complex I). Acts by mediating symmetric dimethylation of 'Arg-118' of NDUFS2 after it assembles into the complex I, stabilizing the early intermediate complex. This Bos taurus (Bovine) protein is Protein arginine methyltransferase NDUFAF7, mitochondrial.